Consider the following 276-residue polypeptide: 4-deoxy-L-threo-5-hexosulose-uronate ketol-isomerase 1 (276 aa).

Zn(2+)-binding residues include His-194, His-196, Glu-201, and His-243.

Belongs to the KduI family. Zn(2+) is required as a cofactor.

The enzyme catalyses 5-dehydro-4-deoxy-D-glucuronate = 3-deoxy-D-glycero-2,5-hexodiulosonate. It functions in the pathway glycan metabolism; pectin degradation; 2-dehydro-3-deoxy-D-gluconate from pectin: step 4/5. Functionally, catalyzes the isomerization of 5-dehydro-4-deoxy-D-glucuronate to 3-deoxy-D-glycero-2,5-hexodiulosonate. This chain is 4-deoxy-L-threo-5-hexosulose-uronate ketol-isomerase 1 (kduI1), found in Enterococcus faecalis (strain ATCC 700802 / V583).